The following is a 713-amino-acid chain: MPLTEEELKLIEETLGRKPNQVELAMFEAQWSEHCSYKSSRKHLRKLKMDSPWVVKGGDAAVVDFGSVYVAFRIESHNHPSAVDPYNGAATGVGGIIRDILSSGAKPIALLDDLIFGDLDENLVKWHVKGVVKGISDYGNRVGVPTVGGETWFDPDFTRNPMVSVACVGVCPKDKLINGTPRPGDLIVIAGNYTGKDGLLGSSFASKNLEEGVEEEYAAIQVPDPLMEKLLIDSILEMRDERLLVFVKDLGGGGLATALSEVAASFGLGVEARLDALHLREPMEAWEIVVSESQERMMLVIRPEDLERAKKVLEKYDVPYSVIGKFTDTGRVVLYYNGEKVADLPAKFLAEGPELDRPYERPKWHLELELLPPLPEVDLGDAIRKVLSSPNVASKRWIYEQYDHEVQIRTVVKPGEGDAAVLRLLEDPPKGIAVATDSNPRYTFLDPLWGAADVFLEAYRNVVASGARPLAAVDQVDAGSPERPDRFWFFVRMIDGLAWVEREVDVPIVGGKVSFYNEDDVTGKQIKPTVMITMIGKVENVYNAKRARAEEGDLLVLVGETFPELGGSEFLWSVHKLVRGKPPVPRPSTEARVAERILKAIKVSGVTGVHDVSVGGLAAAVAELAKGFGATLELDKVKGPWKRPEEALFSESGARYLLAVKPEAAEEVLKVTGGTVVGKVGGGPLRVLLNGKEVASVDDFEDLLENGMTSRLV.

His-34 is a catalytic residue. ATP-binding residues include Tyr-37 and Arg-73. Glu-75 serves as a coordination point for Mg(2+). Substrate contacts are provided by residues 76–79 (SHNH) and Arg-98. His-77 functions as the Proton acceptor in the catalytic mechanism. Asp-99 contacts Mg(2+). Gln-221 provides a ligand contact to substrate. Position 249 (Asp-249) interacts with Mg(2+). 292–294 (ESQ) provides a ligand contact to substrate. ATP is bound by residues Asp-474 and Gly-511. Residue Ser-514 participates in substrate binding.

It belongs to the FGAMS family. In terms of assembly, monomer. Part of the FGAM synthase complex composed of 1 PurL, 1 PurQ and 2 PurS subunits.

It is found in the cytoplasm. The catalysed reaction is N(2)-formyl-N(1)-(5-phospho-beta-D-ribosyl)glycinamide + L-glutamine + ATP + H2O = 2-formamido-N(1)-(5-O-phospho-beta-D-ribosyl)acetamidine + L-glutamate + ADP + phosphate + H(+). Its pathway is purine metabolism; IMP biosynthesis via de novo pathway; 5-amino-1-(5-phospho-D-ribosyl)imidazole from N(2)-formyl-N(1)-(5-phospho-D-ribosyl)glycinamide: step 1/2. In terms of biological role, part of the phosphoribosylformylglycinamidine synthase complex involved in the purines biosynthetic pathway. Catalyzes the ATP-dependent conversion of formylglycinamide ribonucleotide (FGAR) and glutamine to yield formylglycinamidine ribonucleotide (FGAM) and glutamate. The FGAM synthase complex is composed of three subunits. PurQ produces an ammonia molecule by converting glutamine to glutamate. PurL transfers the ammonia molecule to FGAR to form FGAM in an ATP-dependent manner. PurS interacts with PurQ and PurL and is thought to assist in the transfer of the ammonia molecule from PurQ to PurL. This is Phosphoribosylformylglycinamidine synthase subunit PurL from Ignicoccus hospitalis (strain KIN4/I / DSM 18386 / JCM 14125).